The sequence spans 338 residues: Holliday junction branch migration complex subunit RuvB (338 aa).

The interval 1–181 is large ATPase domain (RuvB-L); sequence MEERILTQNF…FGVINRLDYY (181 aa). ATP is bound by residues leucine 20, arginine 21, glycine 62, lysine 65, threonine 66, threonine 67, 128-130, arginine 171, tyrosine 181, and arginine 218; that span reads EDF. Threonine 66 contributes to the Mg(2+) binding site. The segment at 182–252 is small ATPAse domain (RuvB-S); it reads SVEELKEIIK…TSKEALDVLG (71 aa). A head domain (RuvB-H) region spans residues 255-338; that stretch reads EIGLEYIDRK…YIEQGRIEGV (84 aa). 2 residues coordinate DNA: arginine 310 and arginine 315.

Belongs to the RuvB family. Homohexamer. Forms an RuvA(8)-RuvB(12)-Holliday junction (HJ) complex. HJ DNA is sandwiched between 2 RuvA tetramers; dsDNA enters through RuvA and exits via RuvB. An RuvB hexamer assembles on each DNA strand where it exits the tetramer. Each RuvB hexamer is contacted by two RuvA subunits (via domain III) on 2 adjacent RuvB subunits; this complex drives branch migration. In the full resolvosome a probable DNA-RuvA(4)-RuvB(12)-RuvC(2) complex forms which resolves the HJ.

The protein localises to the cytoplasm. It carries out the reaction ATP + H2O = ADP + phosphate + H(+). Functionally, the RuvA-RuvB-RuvC complex processes Holliday junction (HJ) DNA during genetic recombination and DNA repair, while the RuvA-RuvB complex plays an important role in the rescue of blocked DNA replication forks via replication fork reversal (RFR). RuvA specifically binds to HJ cruciform DNA, conferring on it an open structure. The RuvB hexamer acts as an ATP-dependent pump, pulling dsDNA into and through the RuvAB complex. RuvB forms 2 homohexamers on either side of HJ DNA bound by 1 or 2 RuvA tetramers; 4 subunits per hexamer contact DNA at a time. Coordinated motions by a converter formed by DNA-disengaged RuvB subunits stimulates ATP hydrolysis and nucleotide exchange. Immobilization of the converter enables RuvB to convert the ATP-contained energy into a lever motion, pulling 2 nucleotides of DNA out of the RuvA tetramer per ATP hydrolyzed, thus driving DNA branch migration. The RuvB motors rotate together with the DNA substrate, which together with the progressing nucleotide cycle form the mechanistic basis for DNA recombination by continuous HJ branch migration. Branch migration allows RuvC to scan DNA until it finds its consensus sequence, where it cleaves and resolves cruciform DNA. The sequence is that of Holliday junction branch migration complex subunit RuvB from Thermoanaerobacter pseudethanolicus (strain ATCC 33223 / 39E) (Clostridium thermohydrosulfuricum).